A 1199-amino-acid polypeptide reads, in one-letter code: DNA-directed RNA polymerase subunit beta (1199 aa).

Residues 1177–1199 (EQEEKKAKEAEQETAEKEETKTE) form a disordered region.

Belongs to the RNA polymerase beta chain family. The RNAP catalytic core consists of 2 alpha, 1 beta, 1 beta' and 1 omega subunit. When a sigma factor is associated with the core the holoenzyme is formed, which can initiate transcription.

The enzyme catalyses RNA(n) + a ribonucleoside 5'-triphosphate = RNA(n+1) + diphosphate. Functionally, DNA-dependent RNA polymerase catalyzes the transcription of DNA into RNA using the four ribonucleoside triphosphates as substrates. In Ligilactobacillus salivarius (strain UCC118) (Lactobacillus salivarius), this protein is DNA-directed RNA polymerase subunit beta.